The primary structure comprises 221 residues: MSNKINIAIDGPCGAGKSTVAKEVSKKLKYVFINSGSVYRAIALSAIQMGVDFEVENEVFKMLSEIEIDLDEHENIFLNGENVSETIRDDKVAKAASKVAQYPLIRHYVVDFIHKITKKSKGYIMDGRDTTFKLMPHAELKIFLTGTPEVRARRRALENKDKGFETNYDVVLAEVKARDYADQHRETDPLHITDDAIVIDSTDMNFEQVVDKIVSLAKERM.

11–19 (GPCGAGKST) serves as a coordination point for ATP.

The protein belongs to the cytidylate kinase family. Type 1 subfamily.

It is found in the cytoplasm. It carries out the reaction CMP + ATP = CDP + ADP. The catalysed reaction is dCMP + ATP = dCDP + ADP. This chain is Cytidylate kinase, found in Mycoplasmopsis agalactiae (strain NCTC 10123 / CIP 59.7 / PG2) (Mycoplasma agalactiae).